The chain runs to 525 residues: DNA damage-binding protein cmr1 (525 aa).

Over residues 34-50 the composition is skewed to polar residues; that stretch reads TGVFTSNMPRGTSANQS. Disordered regions lie at residues 34 to 103, 214 to 240, and 282 to 301; these read TGVF…ERAK, DASQ…DPDP, and TSSV…PISG. Residues 83–102 show a composition bias toward basic and acidic residues; the sequence is EIAKRKADEEYDRRQEEERA. Residues 182 to 223 form a WD 1 repeat; the sequence is ITPERIYSMTFHPSEAKPVIFAGDKMGHLGILDASQEKPTSA. Residues 227–239 show a composition bias toward acidic residues; sequence EDDEDDEDDDDPD. WD repeat units lie at residues 247–287, 339–379, 384–425, 448–491, and 494–525; these read PHTR…SVEK, LSEK…HTDP, EHQS…SSWK, GRWV…LAQL, and DGIT…CLWM.

It belongs to the WD repeat DDB2/WDR76 family.

In terms of biological role, DNA-binding protein that binds to both single- and double-stranded DNA. Binds preferentially to UV-damaged DNA. May be involved in DNA-metabolic processes. This is DNA damage-binding protein cmr1 from Emericella nidulans (strain FGSC A4 / ATCC 38163 / CBS 112.46 / NRRL 194 / M139) (Aspergillus nidulans).